The primary structure comprises 244 residues: uncharacterized protein (244 aa).

Basic residues predominate over residues 1–11; the sequence is MSRRSRSRSRS. 2 disordered regions span residues 1-104 and 213-244; these read MSRR…TLNE and ARQK…KFGK. Over residues 12 to 31 the composition is skewed to basic and acidic residues; the sequence is PKRDREERKRREDRDRDRER. Residues 32-46 are compositionally biased toward basic residues; the sequence is KRDRKDRERKRRHRS. A compositionally biased stretch (basic and acidic residues) spans 63-75; the sequence is FREERRRRERNES. The segment covering 77 to 89 has biased composition (pro residues); the sequence is KLPPPPPPPPSDP. The segment covering 213-223 has biased composition (basic and acidic residues); the sequence is ARQKSDMKKNE. Over residues 224–234 the composition is skewed to polar residues; the sequence is QQAILNKSGNS.

This is an uncharacterized protein from Caenorhabditis elegans.